The following is a 204-amino-acid chain: MLILASASQSRKKLLENCQIEFIQISSNFDETTIQEKNIFNLALELSFQKANSLSENIQNISLPEEFNYGPLEILGCDSIFEFKGEAYGKPSNKEEAFIRWKKMSGEFGFLHTGHTLIIGHFDSTSKIFKITEIIKKTVSSRVYFSKLEDWEIKSYVDTNEPLYCAGGFALEGIGGKYIEKIEGCFSNVMGLSLPWLRENLYRS.

The active-site Proton acceptor is the aspartate 78.

This sequence belongs to the Maf family. The cofactor is a divalent metal cation.

The protein localises to the cytoplasm. It catalyses the reaction a ribonucleoside 5'-triphosphate + H2O = a ribonucleoside 5'-phosphate + diphosphate + H(+). It carries out the reaction a 2'-deoxyribonucleoside 5'-triphosphate + H2O = a 2'-deoxyribonucleoside 5'-phosphate + diphosphate + H(+). Nucleoside triphosphate pyrophosphatase. May have a dual role in cell division arrest and in preventing the incorporation of modified nucleotides into cellular nucleic acids. This is Nucleoside triphosphate pyrophosphatase from Prochlorococcus marinus (strain MIT 9215).